Reading from the N-terminus, the 267-residue chain is MQEFTNPFPIGSSSLIHCMTNEISCEMLANGILALGCKPVMADDPREVLDFTKQSQALFINLGHLSAEKEKAIRIAASYAAQVCLPMVVDAVGVTASSIRKSLVRDLLDYRPTVLKGNMSEIRSLVGLKHHGVGVDASAKDQETEDLLQVLKDWCQTYHGMSFLVTGPKDLVVSKNQVAVLGNGCAELDWITGTGDLVGALTAVFLSQGKTGFEASCLAVSYLNIAAEKIVVQGMGLEEFRYQVLNQLSLLRRDENWLDTIKGEVYE.

Substrate is bound at residue Met41. ATP is bound by residues Lys116 and Thr166. Gly193 lines the substrate pocket.

This sequence belongs to the Thz kinase family. It depends on Mg(2+) as a cofactor.

The enzyme catalyses 5-(2-hydroxyethyl)-4-methylthiazole + ATP = 4-methyl-5-(2-phosphooxyethyl)-thiazole + ADP + H(+). It functions in the pathway cofactor biosynthesis; thiamine diphosphate biosynthesis; 4-methyl-5-(2-phosphoethyl)-thiazole from 5-(2-hydroxyethyl)-4-methylthiazole: step 1/1. In terms of biological role, catalyzes the phosphorylation of the hydroxyl group of 4-methyl-5-beta-hydroxyethylthiazole (THZ). The sequence is that of Hydroxyethylthiazole kinase 2 from Streptococcus pneumoniae (strain JJA).